The primary structure comprises 682 residues: Methionine--tRNA ligase (682 aa).

The 'HIGH' region motif lies at 15-25 (PYANGAIHLGH). The Zn(2+) site is built by Cys-146, Cys-149, Cys-159, and Cys-162. The 'KMSKS' region motif lies at 331–335 (KMSKS). Lys-334 is an ATP binding site. The tRNA-binding domain occupies 580–682 (DFAKLDMRVA…NGVTAGMQVK (103 aa)).

This sequence belongs to the class-I aminoacyl-tRNA synthetase family. MetG type 1 subfamily. In terms of assembly, homodimer. Zn(2+) is required as a cofactor.

It localises to the cytoplasm. It catalyses the reaction tRNA(Met) + L-methionine + ATP = L-methionyl-tRNA(Met) + AMP + diphosphate. Its function is as follows. Is required not only for elongation of protein synthesis but also for the initiation of all mRNA translation through initiator tRNA(fMet) aminoacylation. This chain is Methionine--tRNA ligase, found in Haemophilus influenzae (strain PittGG).